The following is a 167-amino-acid chain: SsrA-binding protein (167 aa).

Belongs to the SmpB family.

It is found in the cytoplasm. Functionally, required for rescue of stalled ribosomes mediated by trans-translation. Binds to transfer-messenger RNA (tmRNA), required for stable association of tmRNA with ribosomes. tmRNA and SmpB together mimic tRNA shape, replacing the anticodon stem-loop with SmpB. tmRNA is encoded by the ssrA gene; the 2 termini fold to resemble tRNA(Ala) and it encodes a 'tag peptide', a short internal open reading frame. During trans-translation Ala-aminoacylated tmRNA acts like a tRNA, entering the A-site of stalled ribosomes, displacing the stalled mRNA. The ribosome then switches to translate the ORF on the tmRNA; the nascent peptide is terminated with the 'tag peptide' encoded by the tmRNA and targeted for degradation. The ribosome is freed to recommence translation, which seems to be the essential function of trans-translation. This is SsrA-binding protein from Stenotrophomonas maltophilia (strain K279a).